Here is a 988-residue protein sequence, read N- to C-terminus: Bifunctional glutamine synthetase adenylyltransferase/adenylyl-removing enzyme (988 aa).

The segment at 1 to 474 is adenylyl removase; it reads MSSSAIDADI…HYSKLFEGDP (474 aa). The adenylyl transferase stretch occupies residues 480 to 988; sequence LPIDYAGGAE…FNRLIGGNGE (509 aa).

It belongs to the GlnE family. Mg(2+) is required as a cofactor.

The catalysed reaction is [glutamine synthetase]-O(4)-(5'-adenylyl)-L-tyrosine + phosphate = [glutamine synthetase]-L-tyrosine + ADP. It catalyses the reaction [glutamine synthetase]-L-tyrosine + ATP = [glutamine synthetase]-O(4)-(5'-adenylyl)-L-tyrosine + diphosphate. Its function is as follows. Involved in the regulation of glutamine synthetase GlnA, a key enzyme in the process to assimilate ammonia. When cellular nitrogen levels are high, the C-terminal adenylyl transferase (AT) inactivates GlnA by covalent transfer of an adenylyl group from ATP to specific tyrosine residue of GlnA, thus reducing its activity. Conversely, when nitrogen levels are low, the N-terminal adenylyl removase (AR) activates GlnA by removing the adenylyl group by phosphorolysis, increasing its activity. The regulatory region of GlnE binds the signal transduction protein PII (GlnB) which indicates the nitrogen status of the cell. The polypeptide is Bifunctional glutamine synthetase adenylyltransferase/adenylyl-removing enzyme (Rhodopseudomonas palustris (strain HaA2)).